A 213-amino-acid polypeptide reads, in one-letter code: Redox-sensing transcriptional repressor Rex (213 aa).

Residues 16-55 (IYYRYLRLLSNSGKNRVSSTELAEAVKVDSATIRRDFSYF) constitute a DNA-binding region (H-T-H motif). 90-95 (GVGNLG) serves as a coordination point for NAD(+).

It belongs to the transcriptional regulatory Rex family. Homodimer.

Its subcellular location is the cytoplasm. Modulates transcription in response to changes in cellular NADH/NAD(+) redox state. The polypeptide is Redox-sensing transcriptional repressor Rex (Ligilactobacillus salivarius (strain UCC118) (Lactobacillus salivarius)).